The chain runs to 588 residues: Proline--tRNA ligase (588 aa).

This sequence belongs to the class-II aminoacyl-tRNA synthetase family. ProS type 1 subfamily. In terms of assembly, homodimer.

It is found in the cytoplasm. It carries out the reaction tRNA(Pro) + L-proline + ATP = L-prolyl-tRNA(Pro) + AMP + diphosphate. Functionally, catalyzes the attachment of proline to tRNA(Pro) in a two-step reaction: proline is first activated by ATP to form Pro-AMP and then transferred to the acceptor end of tRNA(Pro). As ProRS can inadvertently accommodate and process non-cognate amino acids such as alanine and cysteine, to avoid such errors it has two additional distinct editing activities against alanine. One activity is designated as 'pretransfer' editing and involves the tRNA(Pro)-independent hydrolysis of activated Ala-AMP. The other activity is designated 'posttransfer' editing and involves deacylation of mischarged Ala-tRNA(Pro). The misacylated Cys-tRNA(Pro) is not edited by ProRS. The protein is Proline--tRNA ligase of Corynebacterium glutamicum (strain ATCC 13032 / DSM 20300 / JCM 1318 / BCRC 11384 / CCUG 27702 / LMG 3730 / NBRC 12168 / NCIMB 10025 / NRRL B-2784 / 534).